Reading from the N-terminus, the 103-residue chain is Large ribosomal subunit protein bL21 (103 aa).

This sequence belongs to the bacterial ribosomal protein bL21 family. In terms of assembly, part of the 50S ribosomal subunit. Contacts protein L20.

Its function is as follows. This protein binds to 23S rRNA in the presence of protein L20. The polypeptide is Large ribosomal subunit protein bL21 (Aliivibrio salmonicida (strain LFI1238) (Vibrio salmonicida (strain LFI1238))).